The chain runs to 481 residues: O-phosphoseryl-tRNA(Sec) selenium transferase (481 aa).

Residues 1–36 form a tetramerization region; it reads MKANFGKKEGEYSRLVSKSSNKLLNSLWEKKQIPEE. Arg-69 serves as a coordination point for pyridoxal 5'-phosphate. Positions 90–100 are phosphate loop (P-loop); that stretch reads GRSGNLLEIQP. Substrate-binding residues include Arg-91, Ser-92, and Gln-99. The residue at position 277 (Lys-277) is an N6-(pyridoxal phosphate)lysine. Arg-306 provides a ligand contact to substrate.

Belongs to the SepSecS family. In terms of assembly, homotetramer formed by a catalytic dimer and a non-catalytic dimer serving as a binding platform that orients tRNASec for catalysis. Each tetramer binds the CCA ends of two tRNAs which point to the active sites of the catalytic dimer. Requires pyridoxal 5'-phosphate as cofactor.

It is found in the cytoplasm. The catalysed reaction is O-phospho-L-seryl-tRNA(Sec) + selenophosphate + H2O = L-selenocysteinyl-tRNA(Sec) + 2 phosphate. Its pathway is aminoacyl-tRNA biosynthesis; selenocysteinyl-tRNA(Sec) biosynthesis; selenocysteinyl-tRNA(Sec) from L-seryl-tRNA(Sec) (archaeal/eukaryal route): step 2/2. Converts O-phosphoseryl-tRNA(Sec) to selenocysteinyl-tRNA(Sec) required for selenoprotein biosynthesis. The chain is O-phosphoseryl-tRNA(Sec) selenium transferase (secs-1) from Caenorhabditis elegans.